The sequence spans 2052 residues: Unconventional myosin-X (2052 aa).

At M1 the chain carries N-acetylmethionine. The Myosin motor domain maps to 63–739 (EGVDDMATLT…LEQKLEKRQE (677 aa)). Residues N104, Y113, 160–165 (GAGKTE), and N215 each bind ATP. The interval 619–641 (LHSLMATLSASNPFFVRCIKPNM) is actin-binding. IQ domains follow at residues 742 to 763 (VTRA…KQYK), 764 to 787 (KVLD…RFLH), and 788 to 817 (LKKA…EKRA). Positions 814–884 (EKRAEEEKRK…LSRELEKQKE (71 aa)) are SAH. Residues 819-843 (EEKRKREEEEKRKREEEERERERER) form a disordered region. Residues 885-935 (NKQVEEILRLEKEIEDLQRMKERQELSLTEASLQKLQQLRDEELRRLEDEA) adopt a coiled-coil conformation. Residues S963 and S966 each carry the phosphoserine modification. Residues 964-1093 (VGSGCTGEQG…DYDQDDYEDG (130 aa)) form a disordered region. The segment covering 988-1003 (PEEEEVDEGFEADDDA) has biased composition (acidic residues). The segment covering 1040–1049 (VVPTSPSADS) has biased composition (polar residues). The span at 1081-1092 (GDYDYDQDDYED) shows a compositional bias: acidic residues. Position 1152 is a phosphothreonine (T1152). PH domains follow at residues 1206 to 1304 (EALK…QVHA) and 1386 to 1491 (EFIV…NVTD). The MyTH4 domain occupies 1541 to 1689 (LPYGDINLNL…PSRDEIEALI (149 aa)). Residues 1694-2038 (MTSTVHCHGG…AYISMIVKKR (345 aa)) enclose the FERM domain.

It belongs to the TRAFAC class myosin-kinesin ATPase superfamily. Myosin family. Monomer, when in an inactive conformation in the cytosol. Homodimer in its active, membrane-bound conformation; antiparallel coiled coil-mediated dimer formation. Interacts with ECPAS. Interacts with NEO 1. Interacts with VASP. Interacts with DCC and ITGB5; the presence of DCC inhibits ITGB5 binding. Interacts with tubulin; ITGB5 or DCC binding inhibits tubulin binding. Interacts strongly with CALM3 and weakly with CALM, the CALM3 interaction is essential for function in filopodial extension and motility. Interacts with ITGB1, ITGB3 and ITGB5. In terms of tissue distribution, detected in kidney, testis, liver, kidney, cerebellum and brain cortex (at protein level).

The protein resides in the cytoplasm. It is found in the cytosol. Its subcellular location is the cell projection. It localises to the lamellipodium. The protein localises to the ruffle. The protein resides in the cytoskeleton. It is found in the filopodium tip. Its subcellular location is the cell cortex. It localises to the filopodium membrane. Functionally, myosins are actin-based motor molecules with ATPase activity. Unconventional myosins serve in intracellular movements. MYO10 binds to actin filaments and actin bundles and functions as a plus end-directed motor. Moves with higher velocity and takes larger steps on actin bundles than on single actin filaments. The tail domain binds to membranous compartments containing phosphatidylinositol 3,4,5-trisphosphate, which are then moved relative to actin filaments. Regulates cell shape, cell spreading and cell adhesion. Stimulates the formation and elongation of filopodia. In hippocampal neurons it induces the formation of dendritic filopodia by trafficking the actin-remodeling protein VASP to the tips of filopodia, where it promotes actin elongation. Plays a role in formation of the podosome belt in osteoclasts. The polypeptide is Unconventional myosin-X (MYO10) (Bos taurus (Bovine)).